A 653-amino-acid polypeptide reads, in one-letter code: Epithelial sodium channel subunit gamma (653 aa).

Topologically, residues 1 to 55 (MAPGEKIKAKIKKNLPVKGPQAPTIKELMRWYCLNTNTHGCRRIVVSPGRLRRLL) are cytoplasmic. Residues 56-76 (WIAFTLTAVGLIFWQCALLVF) traverse the membrane as a helical segment. Topologically, residues 77 to 538 (SFYTVSVSIK…EMLLSNFGGQ (462 aa)) are extracellular. Intrachain disulfides connect cysteine 100–cysteine 287, cysteine 211–cysteine 218, cysteine 264–cysteine 271, cysteine 376–cysteine 461, cysteine 398–cysteine 457, cysteine 402–cysteine 453, cysteine 411–cysteine 438, and cysteine 413–cysteine 427. A gating release of inhibition by proteolysis (GRIP); protease-sensitive region that is responsible for the proteolytic activation of the channel region spans residues 137 to 225 (RKQRDTESWS…SDCATYTFSS (89 aa)). N-linked (GlcNAc...) asparagine glycosylation occurs at asparagine 213. Asparagine 275 carries N-linked (GlcNAc...) asparagine glycosylation. A glycan (N-linked (GlcNAc...) asparagine) is linked at asparagine 501. The helical transmembrane segment at 539 to 559 (LGLWMSCSVVCVIEIIEVFFI) threads the bilayer. Residues 560–653 (DSLSIVTRRQ…LADTRLPDEP (94 aa)) are Cytoplasmic-facing. Residues 582-632 (AAPSAEAPSGAQGQENPALEIDDDLPTFTSALSLPPAPGAQVPGTPPPRYN) form a disordered region. The PY motif; recruits WW domain-containing proteins and is thereby required for ubiquitination and inhibition of the channel by NEDD4 and NEDD4L signature appears at 627-631 (PPPRY).

Belongs to the amiloride-sensitive sodium channel (TC 1.A.6) family. SCNN1G subfamily. Component of the heterotrimeric epithelial sodium channel (ENaC) composed of an alpha/SCNN1A, a beta/SCNN1B and a gamma/SCNN1G subunit. Interacts with WWP1 (via WW domains). Interacts with WWP2 (via WW domains); inhibits the channel. Interacts with the full-length immature form of PCSK9 (pro-PCSK9); inhibits ENaC by promoting its proteasomal degradation. Interacts with BPIFA1; the interaction is indirect via SCNN1B and inhibits the proteolytic maturation of SCNN1A and SCNN1G and the activation of ENaC. In terms of processing, phosphorylated on serine and threonine residues. Aldosterone and insulin increase the basal level of phosphorylation. Ubiquitinated. Can be ubiquitinated at multiple sites and undergo monoubiquitination and polyubiquitination. Ubiquitination by NEDD4 or NEDD4L inhibits the ENaC channel through endocytosis, intracellular retention and degradation of its individual subunits. Post-translationally, ENaC is activated through the proteolytic maturation of its subunits. Furin cleaves the SCNN1G subunit first, followed by cleavage by prostasin (PRSS8), which results in a stepwise increase in the open probability of the channel due to the release of an inhibitory tract. BPIFA1, which is recruited by the SCNN1B subunit, prevents the proteolytic activation of ENaC. In terms of processing, N-glycosylated. N-linked glycans are processed to complex type during ENaC complex assembly and transport to the plasma membrane.

It localises to the apical cell membrane. It carries out the reaction Na(+)(in) = Na(+)(out). Its activity is regulated as follows. Originally identified and characterized by its inhibition by the diuretic drug amiloride. Its function is as follows. This is one of the three pore-forming subunits of the heterotrimeric epithelial sodium channel (ENaC), a critical regulator of sodium balance and fluid homeostasis. ENaC operates in epithelial tissues, where it mediates the electrodiffusion of sodium ions from extracellular fluid through the apical membrane of cells, with water following osmotically. It plays a key role in maintaining sodium homeostasis through electrogenic sodium reabsorption in the kidneys. Additionally, ENaC is essential for airway surface liquid homeostasis, which is crucial for proper mucus clearance. The protein is Epithelial sodium channel subunit gamma of Oryctolagus cuniculus (Rabbit).